A 787-amino-acid chain; its full sequence is Probable phosphoketolase (787 aa).

It belongs to the XFP family. It depends on thiamine diphosphate as a cofactor.

The chain is Probable phosphoketolase from Pediococcus pentosaceus (strain ATCC 25745 / CCUG 21536 / LMG 10740 / 183-1w).